A 445-amino-acid chain; its full sequence is FAS-associated factor 2-B (445 aa).

Residues 12 to 48 (DQTEKLLQFQDLTGIESIDQCRQTLQQHNWNIETAVQ) enclose the UBA domain. Residues 275–353 (SERLEREERN…ERKSECLPAE (79 aa)) are a coiled coil. The tract at residues 302 to 355 (RADQEKERKKKEKQDQKRREEEEAQRKQMLEERKKRNLEEEKERKSECLPAEPV) is disordered. Over residues 303–348 (ADQEKERKKKEKQDQKRREEEEAQRKQMLEERKKRNLEEEKERKSE) the composition is skewed to basic and acidic residues. Residues 357–439 (DHPDNVKIIF…GLSQSQLLFV (83 aa)) form the UBX domain.

It localises to the cytoplasm. The protein localises to the lipid droplet. Its subcellular location is the endoplasmic reticulum. Its function is as follows. Plays an important role in endoplasmic reticulum-associated degradation (ERAD) that mediates ubiquitin-dependent degradation of misfolded endoplasmic reticulum proteins. Involved in inhibition of lipid droplet degradation. Involved in stress granule disassembly. This chain is FAS-associated factor 2-B (faf2-b), found in Xenopus laevis (African clawed frog).